Reading from the N-terminus, the 173-residue chain is Photosystem I assembly protein Ycf3 (173 aa).

TPR repeat units follow at residues 35–68 (AYLY…EDNQ), 72–105 (GETL…NPKQ), and 120–153 (GRMA…YPGG).

It belongs to the Ycf3 family.

Its subcellular location is the cellular thylakoid membrane. Functionally, essential for the assembly of the photosystem I (PSI) complex. May act as a chaperone-like factor to guide the assembly of the PSI subunits. This chain is Photosystem I assembly protein Ycf3, found in Prochlorococcus marinus (strain NATL2A).